A 164-amino-acid chain; its full sequence is Histone H1 (164 aa).

Positions 1–10 (MAPRSSTSKS) are enriched in polar residues. A disordered region spans residues 1-164 (MAPRSSTSKS…KKSSKPAKKN (164 aa)). Over residues 16 to 27 (KDHKKAPIKKAI) the composition is skewed to basic residues. Residues Thr47 and Thr54 each carry the phosphothreonine modification. Basic and acidic residues-rich tracts occupy residues 49–61 (VKKDVTPVKADTK), 69–89 (TMKETVSDAKKTVHAAAGDKK), and 117–156 (TKKEVKKDNKTAKKETKKDHKPAKKEAKKETKPAKKDAKK).

Post-translationally, cell-growth/division-associated phosphorylation by a CDC2-like kinase.

It is found in the nucleus. The protein resides in the chromosome. Its function is as follows. Histones H1 are necessary for the condensation of nucleosome chains into higher-order structures. The chain is Histone H1 (HHO) from Tetrahymena thermophila (strain SB210).